A 354-amino-acid chain; its full sequence is MNDSAHIDYARYDHIRPLLWTGDALELLDQRKLPFVVEHVRCDTSDAVAEAIHSLAVRGAPAIGIAAGWGVALAARDIAADDGNAALQKLEPALLRLNAARPTAVNLAWALMRMRRVLGAAGADWRAVIAREAQAIADEDLAANRHMGALGAALIAPGSGVLTHCNTGSLATAGFGTALGVIRAGMAQQRIAKVFAGETRPWLQGARLTVWELQQDGIDATLIADSAASHLMKSGLVQWVIVGADRICANGDTANKIGTYQLAIAARHHGVKFMVVAPSSTVDMATASGDQIEIEQRDPGELFGVGGVRTVADGIHAWNPVFDVTPGDLIDAIVTERGVIAQPDQARMQAAFGN.

Substrate contacts are provided by residues 58–60 (RGA), R101, and Q204. The Proton donor role is filled by D245. 255–256 (NK) contacts substrate.

The protein belongs to the eIF-2B alpha/beta/delta subunits family. MtnA subfamily.

It carries out the reaction 5-(methylsulfanyl)-alpha-D-ribose 1-phosphate = 5-(methylsulfanyl)-D-ribulose 1-phosphate. It participates in amino-acid biosynthesis; L-methionine biosynthesis via salvage pathway; L-methionine from S-methyl-5-thio-alpha-D-ribose 1-phosphate: step 1/6. In terms of biological role, catalyzes the interconversion of methylthioribose-1-phosphate (MTR-1-P) into methylthioribulose-1-phosphate (MTRu-1-P). The protein is Methylthioribose-1-phosphate isomerase of Xanthomonas oryzae pv. oryzae (strain MAFF 311018).